The primary structure comprises 550 residues: Genetic interactor of prohibitins 3, mitochondrial (550 aa).

A mitochondrion-targeting transit peptide spans 1-43 (MKSRLQAFKQFTRFVSCKSCGVELQSKNPSVTGYYKPPRAVRK). In terms of domain architecture, CP-type G spans 107-298 (IHSFNDIKGA…VNDLPGYTMD (192 aa)).

This sequence belongs to the TRAFAC class YlqF/YawG GTPase family. GEP3 subfamily.

The protein localises to the mitochondrion. May be involved in the mitochondrial lipid metabolism. The protein is Genetic interactor of prohibitins 3, mitochondrial (GEP3) of Kluyveromyces lactis (strain ATCC 8585 / CBS 2359 / DSM 70799 / NBRC 1267 / NRRL Y-1140 / WM37) (Yeast).